The sequence spans 763 residues: Phosphoglycerol transferase I (763 aa).

4 consecutive transmembrane segments (helical) span residues 1 to 21, 26 to 46, 77 to 97, and 108 to 128; these read MSELLSFALFLASVLIYAWKA, WWFAATLTVLGLFVVLNITLF, ILPGIGIVLGLTAVFGALGWI, and FGYSLLALLLALGSVDASPAF.

The protein belongs to the OpgB family.

The protein localises to the cell inner membrane. It catalyses the reaction a phosphatidylglycerol + a membrane-derived-oligosaccharide D-glucose = a 1,2-diacyl-sn-glycerol + a membrane-derived-oligosaccharide 6-(glycerophospho)-D-glucose.. It participates in glycan metabolism; osmoregulated periplasmic glucan (OPG) biosynthesis. Transfers a phosphoglycerol residue from phosphatidylglycerol to the membrane-bound nascent glucan backbones. The protein is Phosphoglycerol transferase I of Escherichia coli (strain SMS-3-5 / SECEC).